We begin with the raw amino-acid sequence, 434 residues long: ATP-dependent protease ATPase subunit HslU (434 aa).

ATP is bound by residues Val-18, 60–65 (GVGKTE), Asp-247, Glu-312, and Arg-384.

Belongs to the ClpX chaperone family. HslU subfamily. A double ring-shaped homohexamer of HslV is capped on each side by a ring-shaped HslU homohexamer. The assembly of the HslU/HslV complex is dependent on binding of ATP.

The protein resides in the cytoplasm. ATPase subunit of a proteasome-like degradation complex; this subunit has chaperone activity. The binding of ATP and its subsequent hydrolysis by HslU are essential for unfolding of protein substrates subsequently hydrolyzed by HslV. HslU recognizes the N-terminal part of its protein substrates and unfolds these before they are guided to HslV for hydrolysis. This is ATP-dependent protease ATPase subunit HslU from Bradyrhizobium diazoefficiens (strain JCM 10833 / BCRC 13528 / IAM 13628 / NBRC 14792 / USDA 110).